We begin with the raw amino-acid sequence, 271 residues long: Tetraspanin-11 (271 aa).

The Cytoplasmic portion of the chain corresponds to 1–7 (MFRVSNF). A helical membrane pass occupies residues 8–28 (MVGLANTLVMLVGASAIGYSI). The Extracellular portion of the chain corresponds to 29–44 (YMFVHQGVTDCESAIR). Residues 45-65 (IPLLTTGLILFLVSLLGVIGS) traverse the membrane as a helical segment. Over 66–76 (CFKENLAMVSY) the chain is Cytoplasmic. Residues 77-97 (LIILFGGIVALMIFSIFLFFV) traverse the membrane as a helical segment. The Extracellular segment spans residues 98 to 236 (TNKGAGRVVS…LANIREKWRN (139 aa)). Residues asparagine 185 and asparagine 195 are each glycosylated (N-linked (GlcNAc...) asparagine). Residues 237–257 (LLVFNICLLILLITVYSCGCC) traverse the membrane as a helical segment. The Cytoplasmic segment spans residues 258-271 (ARRNNRTARKSDSV).

The protein belongs to the tetraspanin (TM4SF) family.

The protein localises to the membrane. Its function is as follows. May be involved in the regulation of cell differentiation. This is Tetraspanin-11 (TET11) from Arabidopsis thaliana (Mouse-ear cress).